Reading from the N-terminus, the 248-residue chain is 3-deoxy-manno-octulosonate cytidylyltransferase (248 aa).

The protein belongs to the KdsB family.

The protein resides in the cytoplasm. It carries out the reaction 3-deoxy-alpha-D-manno-oct-2-ulosonate + CTP = CMP-3-deoxy-beta-D-manno-octulosonate + diphosphate. It participates in nucleotide-sugar biosynthesis; CMP-3-deoxy-D-manno-octulosonate biosynthesis; CMP-3-deoxy-D-manno-octulosonate from 3-deoxy-D-manno-octulosonate and CTP: step 1/1. Its pathway is bacterial outer membrane biogenesis; lipopolysaccharide biosynthesis. Its function is as follows. Activates KDO (a required 8-carbon sugar) for incorporation into bacterial lipopolysaccharide in Gram-negative bacteria. This Klebsiella pneumoniae subsp. pneumoniae (strain ATCC 700721 / MGH 78578) protein is 3-deoxy-manno-octulosonate cytidylyltransferase.